Reading from the N-terminus, the 483-residue chain is Endoplasmic reticulum lectin 1 (483 aa).

The signal sequence occupies residues 1-33 (MEEGGGGVRSLVPGGPVLLVLCGLLEASGGGRA). MRH domains are found at residues 111-246 (SSCS…LCSH) and 342-469 (SYCF…ICKI). The cysteines at positions 113 and 126 are disulfide-linked. A glycan (N-linked (GlcNAc...) asparagine) is linked at Asn195. 5 disulfides stabilise this stretch: Cys199-Cys232, Cys215-Cys244, Cys344-Cys357, Cys421-Cys455, and Cys436-Cys467.

As to quaternary structure, may form a complex with OS9, HSPA5, SYVN1, and SEL1L with which it interacts directly. Interacts (via PRKCSH 2 domain) with KREMEN2 (when glycosylated). Interacts with HSPA5. Isoform 1 and isoform 2 are N-glycosylated.

The protein localises to the endoplasmic reticulum lumen. Probable lectin that binds selectively to improperly folded lumenal proteins. May function in endoplasmic reticulum quality control and endoplasmic reticulum-associated degradation (ERAD) of both non-glycosylated proteins and glycoproteins. The polypeptide is Endoplasmic reticulum lectin 1 (ERLEC1) (Homo sapiens (Human)).